The primary structure comprises 180 residues: Transcription factor HES-7.1-B (180 aa).

The bHLH domain maps to 13 to 70 (HRKLLKPLVEKRRRERINNSLEKLRIFLSQTLKSEKLKNPKVEKAEILECTVQFLQSR). An Orange domain is found at 84–116 (YQSGFQHCLETTLHFMNSKPDMNGVTKELLSHQ). The WRPW motif signature appears at 176 to 179 (WRPW).

Transcription repression requires formation of a complex with a corepressor protein of the Groucho/TLE family. As to expression, expressed in the presumptive midbrain-hindbrain boundary (MHB) as early as the early gastrula stage (stage 10.5). Expression in the MHB continues through to tailbud stage. Also transiently expressed in the eye anlage at late neurula stage.

The protein localises to the nucleus. Functionally, transcriptional repressor. Represses transcription from both N box- and E box-containing promoters. Demarcates the prospective midbrain-hindbrain boundary (MHB) region in the neuroectoderm in early gastrulae embryos by repressing transcription of a number of target genes. In Xenopus laevis (African clawed frog), this protein is Transcription factor HES-7.1-B (hes7.1-b).